Consider the following 296-residue polypeptide: Zinc finger protein 75A (296 aa).

The KRAB domain maps to 1 to 66 (MYFSQEEWEL…VSPEFKDSAG (66 aa)). C2H2-type zinc fingers lie at residues 161–183 (FKCQ…QRIH), 189–211 (YKCQ…LTTH), 217–239 (YKCS…QRTH), 245–267 (FTCH…RRTH), and 273–295 (YTCS…QKLH).

The protein belongs to the krueppel C2H2-type zinc-finger protein family.

It localises to the nucleus. May be involved in transcriptional regulation. This Homo sapiens (Human) protein is Zinc finger protein 75A (ZNF75A).